The following is a 259-amino-acid chain: Small ribosomal subunit protein uS2 (259 aa).

The protein belongs to the universal ribosomal protein uS2 family.

The polypeptide is Small ribosomal subunit protein uS2 (Streptococcus pneumoniae (strain Hungary19A-6)).